The primary structure comprises 99 residues: Aspartyl/glutamyl-tRNA(Asn/Gln) amidotransferase subunit C (99 aa).

Belongs to the GatC family. In terms of assembly, heterotrimer of A, B and C subunits.

It catalyses the reaction L-glutamyl-tRNA(Gln) + L-glutamine + ATP + H2O = L-glutaminyl-tRNA(Gln) + L-glutamate + ADP + phosphate + H(+). The enzyme catalyses L-aspartyl-tRNA(Asn) + L-glutamine + ATP + H2O = L-asparaginyl-tRNA(Asn) + L-glutamate + ADP + phosphate + 2 H(+). Allows the formation of correctly charged Asn-tRNA(Asn) or Gln-tRNA(Gln) through the transamidation of misacylated Asp-tRNA(Asn) or Glu-tRNA(Gln) in organisms which lack either or both of asparaginyl-tRNA or glutaminyl-tRNA synthetases. The reaction takes place in the presence of glutamine and ATP through an activated phospho-Asp-tRNA(Asn) or phospho-Glu-tRNA(Gln). The polypeptide is Aspartyl/glutamyl-tRNA(Asn/Gln) amidotransferase subunit C (Ralstonia pickettii (strain 12J)).